Here is a 392-residue protein sequence, read N- to C-terminus: Chaperone protein DnaJ (392 aa).

In terms of domain architecture, J spans 2 to 67 (DYYDVLGVSK…QKRESYDRYG (66 aa)). A CR-type zinc finger spans residues 149–227 (GVEKELLVSG…CRGQGRIKDK (79 aa)). The Zn(2+) site is built by Cys-162, Cys-165, Cys-179, Cys-182, Cys-201, Cys-204, Cys-215, and Cys-218. CXXCXGXG motif repeat units follow at residues 162 to 169 (CETCLGSG), 179 to 186 (CDRCKGSG), 201 to 208 (CPECGGEG), and 215 to 222 (CSNCRGQG).

The protein belongs to the DnaJ family. As to quaternary structure, homodimer. Requires Zn(2+) as cofactor.

It is found in the cytoplasm. Its function is as follows. Participates actively in the response to hyperosmotic and heat shock by preventing the aggregation of stress-denatured proteins and by disaggregating proteins, also in an autonomous, DnaK-independent fashion. Unfolded proteins bind initially to DnaJ; upon interaction with the DnaJ-bound protein, DnaK hydrolyzes its bound ATP, resulting in the formation of a stable complex. GrpE releases ADP from DnaK; ATP binding to DnaK triggers the release of the substrate protein, thus completing the reaction cycle. Several rounds of ATP-dependent interactions between DnaJ, DnaK and GrpE are required for fully efficient folding. Also involved, together with DnaK and GrpE, in the DNA replication of plasmids through activation of initiation proteins. This is Chaperone protein DnaJ from Chlamydia caviae (strain ATCC VR-813 / DSM 19441 / 03DC25 / GPIC) (Chlamydophila caviae).